Here is a 153-residue protein sequence, read N- to C-terminus: Small heat shock protein ibp (153 aa).

Positions 35 to 153 constitute a sHSP domain; that stretch reads KIISDSVPPY…KIQKIQINVK (119 aa).

This sequence belongs to the small heat shock protein (HSP20) family.

The sequence is that of Small heat shock protein ibp (ibp) from Buchnera aphidicola subsp. Thelaxes suberi.